A 544-amino-acid chain; its full sequence is MAKRIIYNENARRALEKGIDILAESVAVTLGPKGRNVVLEKKFGAPQIINDGVTIAKEIELEDHIENTGVALIRQAASKTNDAAGDGTTTATVLAHAMVKAGLRNVAAGANAITLKKGIDKASDFLVSKIKEQAKPIADSNAIAQVGTISAGNDEEVGKMIADAMDKVGKEGVISLEEGKSMETELEVTEGMRFDKGYISPYFATDTERMEAVLDEPYILLTDKKIGLVQDLVPVLEQIARTGKPLMIIAEDIEKEALATLVVNRLRGVLNVAAVKAPGFGDRRKAMLEDMAVLTNGQLITEDAGLKLENAKLEMLGTARRVTINKDTTTIVAEGNEAAVGARCEQIKKQMDETDSTYDKEKLQERLAKLAGGVAVVKVGAATETEMKDKKLRLEDAINATKAAVEEGIVPGGGTTLAHLAPSLEEWANGNLSGEELIGANIVAAALTAPLMRIAENAGANGAVVAENVKSRAISEGYNAATGDYVDMLAAGIVDPAKVTRSGLQNAASIAGMVLTTECIVADLPEKKDAAPAGGGMGGGDFDY.

ATP contacts are provided by residues 29–32, 86–90, glycine 413, 479–481, and aspartate 495; these read TLGP, DGTTT, and NAA.

The protein belongs to the chaperonin (HSP60) family. In terms of assembly, forms a cylinder of 14 subunits composed of two heptameric rings stacked back-to-back. Interacts with the co-chaperonin GroES.

The protein resides in the cytoplasm. The catalysed reaction is ATP + H2O + a folded polypeptide = ADP + phosphate + an unfolded polypeptide.. Functionally, together with its co-chaperonin GroES, plays an essential role in assisting protein folding. The GroEL-GroES system forms a nano-cage that allows encapsulation of the non-native substrate proteins and provides a physical environment optimized to promote and accelerate protein folding. In Parasynechococcus marenigrum (strain WH8102), this protein is Chaperonin GroEL 1.